Consider the following 274-residue polypeptide: Diaminopimelate epimerase (274 aa).

2 residues coordinate substrate: asparagine 11 and asparagine 76. Cysteine 85 serves as the catalytic Proton donor. Substrate-binding positions include 86-87 (GN), asparagine 157, asparagine 189, and 207-208 (ER). Cysteine 216 functions as the Proton acceptor in the catalytic mechanism. 217 to 218 (GT) lines the substrate pocket.

This sequence belongs to the diaminopimelate epimerase family. As to quaternary structure, homodimer.

It is found in the cytoplasm. The catalysed reaction is (2S,6S)-2,6-diaminopimelate = meso-2,6-diaminopimelate. It functions in the pathway amino-acid biosynthesis; L-lysine biosynthesis via DAP pathway; DL-2,6-diaminopimelate from LL-2,6-diaminopimelate: step 1/1. In terms of biological role, catalyzes the stereoinversion of LL-2,6-diaminopimelate (L,L-DAP) to meso-diaminopimelate (meso-DAP), a precursor of L-lysine and an essential component of the bacterial peptidoglycan. This Thermobifida fusca (strain YX) protein is Diaminopimelate epimerase.